Consider the following 100-residue polypeptide: Urease subunit gamma (100 aa).

It belongs to the urease gamma subunit family. In terms of assembly, heterotrimer of UreA (gamma), UreB (beta) and UreC (alpha) subunits. Three heterotrimers associate to form the active enzyme.

Its subcellular location is the cytoplasm. It catalyses the reaction urea + 2 H2O + H(+) = hydrogencarbonate + 2 NH4(+). It participates in nitrogen metabolism; urea degradation; CO(2) and NH(3) from urea (urease route): step 1/1. The sequence is that of Urease subunit gamma from Aliivibrio fischeri (strain ATCC 700601 / ES114) (Vibrio fischeri).